A 226-amino-acid chain; its full sequence is Ribonuclease 3 (226 aa).

An RNase III domain is found at 7-129 (LPRLCRTLSY…IIGAVYLDSD (123 aa)). E42 is a Mg(2+) binding site. The active site involves D46. Positions 115 and 118 each coordinate Mg(2+). Residue E118 is part of the active site. A DRBM domain is found at 156–226 (DAKTLLQEHL…AAQVLELLKK (71 aa)).

It belongs to the ribonuclease III family. In terms of assembly, homodimer. Mg(2+) serves as cofactor.

The protein localises to the cytoplasm. It catalyses the reaction Endonucleolytic cleavage to 5'-phosphomonoester.. Functionally, digests double-stranded RNA. Involved in the processing of primary rRNA transcript to yield the immediate precursors to the large and small rRNAs (23S and 16S). Processes some mRNAs, and tRNAs when they are encoded in the rRNA operon. Processes pre-crRNA and tracrRNA of type II CRISPR loci if present in the organism. This chain is Ribonuclease 3, found in Shewanella baltica (strain OS223).